Reading from the N-terminus, the 213-residue chain is 3-isopropylmalate dehydratase small subunit (213 aa).

It belongs to the LeuD family. LeuD type 1 subfamily. As to quaternary structure, heterodimer of LeuC and LeuD.

It catalyses the reaction (2R,3S)-3-isopropylmalate = (2S)-2-isopropylmalate. It functions in the pathway amino-acid biosynthesis; L-leucine biosynthesis; L-leucine from 3-methyl-2-oxobutanoate: step 2/4. Catalyzes the isomerization between 2-isopropylmalate and 3-isopropylmalate, via the formation of 2-isopropylmaleate. In Pseudomonas syringae pv. tomato (strain ATCC BAA-871 / DC3000), this protein is 3-isopropylmalate dehydratase small subunit.